A 452-amino-acid chain; its full sequence is Chromosomal replication initiator protein DnaA (452 aa).

Residues 1 to 80 (MSSTVSTLWR…NNDQFMVKIQ (80 aa)) are domain I, interacts with DnaA modulators. Residues 80–114 (QDGIKPTEKTTTNVEQKTQNENCHNEITSQQNYRS) form a domain II region. The interval 115 to 332 (YLNKNHVFDN…GALNRVHAHA (218 aa)) is domain III, AAA+ region. 4 residues coordinate ATP: glycine 160, glycine 162, lysine 163, and threonine 164. Residues 333-452 (EFTGKAITID…WSNLIRTLSV (120 aa)) are domain IV, binds dsDNA.

Belongs to the DnaA family. As to quaternary structure, oligomerizes as a right-handed, spiral filament on DNA at oriC.

The protein resides in the cytoplasm. Functionally, plays an essential role in the initiation and regulation of chromosomal replication. ATP-DnaA binds to the origin of replication (oriC) to initiate formation of the DNA replication initiation complex once per cell cycle. Binds the DnaA box (a 9 base pair repeat at the origin) and separates the double-stranded (ds)DNA. Forms a right-handed helical filament on oriC DNA; dsDNA binds to the exterior of the filament while single-stranded (ss)DNA is stabiized in the filament's interior. The ATP-DnaA-oriC complex binds and stabilizes one strand of the AT-rich DNA unwinding element (DUE), permitting loading of DNA polymerase. After initiation quickly degrades to an ADP-DnaA complex that is not apt for DNA replication. Binds acidic phospholipids. The sequence is that of Chromosomal replication initiator protein DnaA from Histophilus somni (strain 129Pt) (Haemophilus somnus).